The sequence spans 326 residues: Structural protein ORF326a (326 aa).

Residues 1-28 (MSTTFRGKKEEEEEEEEEKEEKEEELFN) are disordered. The segment covering 11–26 (EEEEEEEEKEEKEEEL) has biased composition (acidic residues).

The protein localises to the virion. The chain is Structural protein ORF326a from Acidianus two-tailed virus (ATV).